Reading from the N-terminus, the 153-residue chain is Probable inactive ribonuclease-like protein 13 (153 aa).

The N-terminal stretch at Met-1–Gly-22 is a signal peptide.

The protein belongs to the pancreatic ribonuclease family.

The protein resides in the secreted. In terms of biological role, does not exhibit any ribonuclease activity. This chain is Probable inactive ribonuclease-like protein 13 (Rnase13), found in Rattus norvegicus (Rat).